A 235-amino-acid chain; its full sequence is Phosphatidylserine decarboxylase proenzyme (235 aa).

The active-site Schiff-base intermediate with substrate; via pyruvic acid is the serine 204. Serine 204 bears the Pyruvic acid (Ser); by autocatalysis mark.

The protein belongs to the phosphatidylserine decarboxylase family. PSD-A subfamily. In terms of assembly, heterodimer of a large membrane-associated beta subunit and a small pyruvoyl-containing alpha subunit. The cofactor is pyruvate. Post-translationally, is synthesized initially as an inactive proenzyme. Formation of the active enzyme involves a self-maturation process in which the active site pyruvoyl group is generated from an internal serine residue via an autocatalytic post-translational modification. Two non-identical subunits are generated from the proenzyme in this reaction, and the pyruvate is formed at the N-terminus of the alpha chain, which is derived from the carboxyl end of the proenzyme. The post-translation cleavage follows an unusual pathway, termed non-hydrolytic serinolysis, in which the side chain hydroxyl group of the serine supplies its oxygen atom to form the C-terminus of the beta chain, while the remainder of the serine residue undergoes an oxidative deamination to produce ammonia and the pyruvoyl prosthetic group on the alpha chain.

Its subcellular location is the cell membrane. The enzyme catalyses a 1,2-diacyl-sn-glycero-3-phospho-L-serine + H(+) = a 1,2-diacyl-sn-glycero-3-phosphoethanolamine + CO2. The protein operates within phospholipid metabolism; phosphatidylethanolamine biosynthesis; phosphatidylethanolamine from CDP-diacylglycerol: step 2/2. Catalyzes the formation of phosphatidylethanolamine (PtdEtn) from phosphatidylserine (PtdSer). In Mycobacterium sp. (strain JLS), this protein is Phosphatidylserine decarboxylase proenzyme.